Here is a 159-residue protein sequence, read N- to C-terminus: 3-dehydroquinate dehydratase (159 aa).

Residue Tyr-22 is the Proton acceptor of the active site. Asn-73, His-79, and Asp-86 together coordinate substrate. Catalysis depends on His-99, which acts as the Proton donor. Residues 100 to 101 (IS) and Arg-110 each bind substrate.

The protein belongs to the type-II 3-dehydroquinase family. In terms of assembly, homododecamer.

It carries out the reaction 3-dehydroquinate = 3-dehydroshikimate + H2O. It functions in the pathway metabolic intermediate biosynthesis; chorismate biosynthesis; chorismate from D-erythrose 4-phosphate and phosphoenolpyruvate: step 3/7. In terms of biological role, catalyzes a trans-dehydration via an enolate intermediate. The protein is 3-dehydroquinate dehydratase of Campylobacter jejuni subsp. jejuni serotype O:6 (strain 81116 / NCTC 11828).